The following is a 151-amino-acid chain: Probable transcriptional regulator syrB2 (151 aa).

Positions 1–61 (MADESNTGSI…PRRYSEQQRK (61 aa)) are disordered. The segment covering 11-23 (AAAVAPNADVKAP) has biased composition (low complexity). Positions 24-35 (AAKKKRSPRRQK) are enriched in basic residues.

This sequence belongs to the SyrB family.

Functionally, seems to affect the transcription of cya3. May be negatively autoregulated. This chain is Probable transcriptional regulator syrB2 (syrB2), found in Rhizobium meliloti (strain 1021) (Ensifer meliloti).